A 210-amino-acid polypeptide reads, in one-letter code: Cytochrome c biogenesis ATP-binding export protein CcmA (210 aa).

The region spanning 4–208 (VPTLSFSKLG…GAIPAQLLEL (205 aa)) is the ABC transporter domain. Residue 39–46 (GANGVGKT) participates in ATP binding.

The protein belongs to the ABC transporter superfamily. CcmA exporter (TC 3.A.1.107) family. The complex is composed of two ATP-binding proteins (CcmA) and two transmembrane proteins (CcmB).

Its subcellular location is the cell inner membrane. It carries out the reaction heme b(in) + ATP + H2O = heme b(out) + ADP + phosphate + H(+). Functionally, part of the ABC transporter complex CcmAB involved in the biogenesis of c-type cytochromes; once thought to export heme, this seems not to be the case, but its exact role is uncertain. Responsible for energy coupling to the transport system. The protein is Cytochrome c biogenesis ATP-binding export protein CcmA of Albidiferax ferrireducens (strain ATCC BAA-621 / DSM 15236 / T118) (Rhodoferax ferrireducens).